Consider the following 563-residue polypeptide: Calmodulin-binding protein 60 G (563 aa).

The interval 1 to 76 is calmodulin-binding; it reads MKIRNSPSFH…SSCVSMERSR (76 aa). The DNA-binding stretch occupies residues 147 to 263; sequence ESWTVEGFNR…VSATRLAERK (117 aa).

Belongs to the plant ACBP60 protein family. Interacts with calmodulin (CaM) in the presence of calcium ions; this interaction is required for defense responses. In terms of assembly, (Microbial infection) Interacts with V.dahliae SCP41; the interaction is direct and inhibits CBP60G. In terms of tissue distribution, expressed in seedlings, roots, leaves, inflorescences and flowers, and, to a lower extent, in siliques. Particularly present in guard cells.

The protein resides in the nucleus. Transcription activator that binds DNA in a sequence-specific manner, 5'-GAAATTTTGG-3', to promote the expression of target genes. Recruited to the promoter of ICS1 and other defense-related genes (e.g. PR1, PR2 and EDS5) in response to both biotic (e.g. Pseudomonas syringae pv. maculicola ES4326, P.syringae pv. tomato DC3000, and microbe-associated molecular patterns (MAMPs) such as flg22) and abiotic stresses (e.g. UV-B, drought and abscisic acid), thus triggering rapid defense responses by stimulating salicylic acid (SA) biosynthesis. Involved in basal and systemic acquired resistance to P.syringae and Hyaloperonospora arabidopsidis. Mediates resistance to drought and sensitivity to abscisic acid (ABA), especially for ABA-mediated signaling process that regulates early seedling growth. The chain is Calmodulin-binding protein 60 G from Arabidopsis thaliana (Mouse-ear cress).